We begin with the raw amino-acid sequence, 367 residues long: Phospho-N-acetylmuramoyl-pentapeptide-transferase (367 aa).

10 consecutive transmembrane segments (helical) span residues 34-54 (GAVV…IDHL), 78-98 (TPTM…VLWA), 101-121 (LNPY…VGFY), 135-155 (FGSK…CYAL), 175-195 (TVLH…VGAG), 206-226 (GLAI…AYLA), 246-266 (LAVL…FNAP), 270-290 (IFMG…IAVA), 295-315 (IVLA…IVQV), and 344-364 (QIVI…LSTL).

Belongs to the glycosyltransferase 4 family. MraY subfamily. Mg(2+) is required as a cofactor.

It localises to the cell inner membrane. It carries out the reaction UDP-N-acetyl-alpha-D-muramoyl-L-alanyl-gamma-D-glutamyl-meso-2,6-diaminopimeloyl-D-alanyl-D-alanine + di-trans,octa-cis-undecaprenyl phosphate = di-trans,octa-cis-undecaprenyl diphospho-N-acetyl-alpha-D-muramoyl-L-alanyl-D-glutamyl-meso-2,6-diaminopimeloyl-D-alanyl-D-alanine + UMP. It participates in cell wall biogenesis; peptidoglycan biosynthesis. Its function is as follows. Catalyzes the initial step of the lipid cycle reactions in the biosynthesis of the cell wall peptidoglycan: transfers peptidoglycan precursor phospho-MurNAc-pentapeptide from UDP-MurNAc-pentapeptide onto the lipid carrier undecaprenyl phosphate, yielding undecaprenyl-pyrophosphoryl-MurNAc-pentapeptide, known as lipid I. This Bradyrhizobium diazoefficiens (strain JCM 10833 / BCRC 13528 / IAM 13628 / NBRC 14792 / USDA 110) protein is Phospho-N-acetylmuramoyl-pentapeptide-transferase.